The sequence spans 157 residues: Protein Smg (157 aa).

It belongs to the Smg family.

This Yersinia pseudotuberculosis serotype O:1b (strain IP 31758) protein is Protein Smg.